A 142-amino-acid chain; its full sequence is Peptide methionine sulfoxide reductase MsrB (142 aa).

One can recognise a MsrB domain in the interval K3 to F126. The active-site Nucleophile is C115.

This sequence belongs to the MsrB Met sulfoxide reductase family.

It catalyses the reaction L-methionyl-[protein] + [thioredoxin]-disulfide + H2O = L-methionyl-(R)-S-oxide-[protein] + [thioredoxin]-dithiol. In Lactococcus lactis subsp. lactis (strain IL1403) (Streptococcus lactis), this protein is Peptide methionine sulfoxide reductase MsrB.